Here is a 347-residue protein sequence, read N- to C-terminus: Protein YIPF3 (347 aa).

Residues 1 to 31 (MATPAAPASGVRNGAGPEWGGFEENIQGGGS) are disordered. Alanine 2 bears the N-acetylalanine; in Protein YIPF3, N-terminally processed mark. Over 2-145 (ATPAAPASGV…PIKMVNFPQK (144 aa)) the chain is Cytoplasmic. Residues 146–166 (VAGELYGPLMLVFTLVAILLH) form a helical membrane-spanning segment. Residues 167 to 184 (GMKTSDTIIREGTLMGTA) are Lumenal-facing. Residues 185 to 205 (IGTCFGYWLGVSSFIYFLAYL) traverse the membrane as a helical segment. Residues 206-211 (CNAQIT) lie on the Cytoplasmic side of the membrane. Residues 212-234 (MLQMLALLGYGLFGHCIVLFITY) form a helical membrane-spanning segment. Over 235–237 (NIH) the chain is Lumenal. Residues 238–260 (LHALFYLFWLLVGGLSTLRMVAV) traverse the membrane as a helical segment. The Cytoplasmic segment spans residues 261-271 (LVSRTVGPTQR). Residues 272–292 (LLLCGTLAALHMLFLLYLHFA) form a helical membrane-spanning segment. Residues 293–347 (YHKVVEGILDTLEGPNIPPMQRVPRDIPAVLPAARLPVAVINATAKAIAVTLQSH) lie on the Lumenal side of the membrane. An N-linked (GlcNAc...) asparagine glycan is attached at asparagine 334.

This sequence belongs to the YIP1 family. As to quaternary structure, interacts with YIPF4 and YIPF5. Expressed by splenocytes (at protein level).

It is found in the cell membrane. The protein localises to the golgi apparatus. Its subcellular location is the cis-Golgi network membrane. The protein resides in the cytoplasm. In terms of biological role, involved in the maintenance of the Golgi structure. May play a role in hematopoiesis. In Mus musculus (Mouse), this protein is Protein YIPF3 (Yipf3).